The chain runs to 263 residues: Protein PUN1 (263 aa).

The Cytoplasmic portion of the chain corresponds to 1–6; that stretch reads MRNFFT. A helical transmembrane segment spans residues 7–27; sequence LFFAAIFSLGALILAIVACAG. At 28 to 143 the chain is on the extracellular side; sequence STKNYSPINK…MTYYNNLVKC (116 aa). Asn-100 carries N-linked (GlcNAc...) asparagine glycosylation. The chain crosses the membrane as a helical span at residues 144–164; that stretch reads MFITILIGIVLTFVNLVFNVL. The Cytoplasmic segment spans residues 165-172; that stretch reads RWIIHIRP. A helical membrane pass occupies residues 173–193; the sequence is LTWFGAFFSFFAFAALLVSIG. The Extracellular portion of the chain corresponds to 194 to 223; it reads SCLGTYSYIKYILKHNYSDYGISMSIGRNY. A glycan (N-linked (GlcNAc...) asparagine) is linked at Asn-209. Residues 224–244 form a helical membrane-spanning segment; it reads QGLMWGAVVGALLNFILWCSV. The Cytoplasmic segment spans residues 245–263; sequence RSRPTVIYANAPIEEKPLI. Lys-260 participates in a covalent cross-link: Glycyl lysine isopeptide (Lys-Gly) (interchain with G-Cter in ubiquitin).

Belongs to the SUR7 family. Post-translationally, N-glycosylated.

Its subcellular location is the cell membrane. Its function is as follows. Contributes to the wild-type cellular response to nitrogen stress through signaling pathways that regulate the expression of genes involved in amino acid biosynthesis. Required for wild-type filamentous growth, cell growth, and cell-cell adhesion. This chain is Protein PUN1 (PUN1), found in Saccharomyces cerevisiae (strain ATCC 204508 / S288c) (Baker's yeast).